The primary structure comprises 309 residues: Homoserine kinase (309 aa).

91 to 101 (PVGSGLGSSAC) contributes to the ATP binding site.

The protein belongs to the GHMP kinase family. Homoserine kinase subfamily.

It localises to the cytoplasm. The catalysed reaction is L-homoserine + ATP = O-phospho-L-homoserine + ADP + H(+). The protein operates within amino-acid biosynthesis; L-threonine biosynthesis; L-threonine from L-aspartate: step 4/5. In terms of biological role, catalyzes the ATP-dependent phosphorylation of L-homoserine to L-homoserine phosphate. In Hamiltonella defensa subsp. Acyrthosiphon pisum (strain 5AT), this protein is Homoserine kinase.